The primary structure comprises 449 residues: Na(+)-translocating NADH-quinone reductase subunit A (449 aa).

It belongs to the NqrA family. As to quaternary structure, composed of six subunits; NqrA, NqrB, NqrC, NqrD, NqrE and NqrF.

It carries out the reaction a ubiquinone + n Na(+)(in) + NADH + H(+) = a ubiquinol + n Na(+)(out) + NAD(+). NQR complex catalyzes the reduction of ubiquinone-1 to ubiquinol by two successive reactions, coupled with the transport of Na(+) ions from the cytoplasm to the periplasm. NqrA to NqrE are probably involved in the second step, the conversion of ubisemiquinone to ubiquinol. The polypeptide is Na(+)-translocating NADH-quinone reductase subunit A (Actinobacillus pleuropneumoniae serotype 5b (strain L20)).